The primary structure comprises 635 residues: Isethionate TRAP transporter permease protein DctMQ (635 aa).

16 consecutive transmembrane segments (helical) span residues 38–58 (KPFL…QTLY), 75–95 (TEEM…PVAI), 117–137 (ISWI…LWQS), 154–174 (LQLP…LMAV), 192–212 (TVIG…ADYI), 217–237 (VLFG…IGLG), 266–286 (FPIM…AGGL), 299–319 (GALP…FAAI), 350–370 (AIVA…PFVV), 379–399 (IGKL…ALMA), 431–451 (WALM…MTPT), 453–473 (AAAL…RELS), 481–501 (VVEA…ATIF), 526–546 (IAIL…MEAL), 572–592 (IIMV…VNLF), and 609–629 (VLPL…VPAI).

The protein in the N-terminal section; belongs to the TRAP transporter small permease family. It in the C-terminal section; belongs to the TRAP transporter large permease family. In terms of assembly, the complex comprises the periplasmic solute receptor protein DctP, and the fused transmembrane protein DctMQ.

Its subcellular location is the cell inner membrane. Its pathway is organosulfur degradation; alkanesulfonate degradation. Part of the tripartite ATP-independent periplasmic (TRAP) transport system DctPQM involved in the uptake of isethionate (2-hydroxyethanesulfonate), which is then catabolized by enzymes encoded by adjacent genes in the locus. Thereby is involved in an anaerobic respiration pathway that converts the sulfonate isethionate to ammonia, acetate and sulfide. This Oleidesulfovibrio alaskensis (strain ATCC BAA-1058 / DSM 17464 / G20) (Desulfovibrio alaskensis) protein is Isethionate TRAP transporter permease protein DctMQ.